Reading from the N-terminus, the 339-residue chain is Carboxyvinyl-carboxyphosphonate phosphorylmutase, chloroplastic (339 aa).

The N-terminal 30 residues, 1 to 30 (MSMLMAVKTTSLCCSSLNLTASPTFRRNPR), are a transit peptide targeting the chloroplast.

Belongs to the isocitrate lyase/PEP mutase superfamily.

Its subcellular location is the plastid. The protein resides in the chloroplast. The catalysed reaction is 1-carboxyvinyl carboxyphosphonate + H(+) = 3-(hydrohydroxyphosphoryl)pyruvate + CO2. The chain is Carboxyvinyl-carboxyphosphonate phosphorylmutase, chloroplastic from Arabidopsis thaliana (Mouse-ear cress).